The chain runs to 873 residues: Leucine--tRNA ligase (873 aa).

The 'HIGH' region motif lies at 47–57 (PYPSGKLHMGH). The 'KMSKS' region signature appears at 636-640 (KMSKS). Residue Lys-639 participates in ATP binding.

This sequence belongs to the class-I aminoacyl-tRNA synthetase family.

It localises to the cytoplasm. It catalyses the reaction tRNA(Leu) + L-leucine + ATP = L-leucyl-tRNA(Leu) + AMP + diphosphate. The protein is Leucine--tRNA ligase of Acinetobacter baylyi (strain ATCC 33305 / BD413 / ADP1).